A 403-amino-acid chain; its full sequence is Argininosuccinate synthase (403 aa).

ATP-binding positions include 13 to 21 (AYSGGLDTS) and Ala-40. L-citrulline contacts are provided by Tyr-91 and Ser-96. Residue Gly-121 coordinates ATP. L-aspartate-binding residues include Thr-123, Asn-127, and Asp-128. L-citrulline is bound at residue Asn-127. Residues Arg-131, Ser-180, Ser-189, Glu-265, and Tyr-277 each contribute to the L-citrulline site.

This sequence belongs to the argininosuccinate synthase family. Type 1 subfamily. As to quaternary structure, homotetramer.

The protein localises to the cytoplasm. The enzyme catalyses L-citrulline + L-aspartate + ATP = 2-(N(omega)-L-arginino)succinate + AMP + diphosphate + H(+). The protein operates within amino-acid biosynthesis; L-arginine biosynthesis; L-arginine from L-ornithine and carbamoyl phosphate: step 2/3. The chain is Argininosuccinate synthase from Leptospira interrogans serogroup Icterohaemorrhagiae serovar copenhageni (strain Fiocruz L1-130).